Reading from the N-terminus, the 269-residue chain is Phosphoribosylformylglycinamidine synthase subunit PurQ (269 aa).

A Glutamine amidotransferase type-1 domain is found at 5-262 (VLVMSGYGIN…IESNLQIFKN (258 aa)). Residue Cys-95 is the Nucleophile of the active site. Residues His-222, Glu-224, and Glu-232 contribute to the active site.

As to quaternary structure, part of the FGAM synthase complex composed of 1 PurL, 1 PurQ and 2 PurS subunits.

It localises to the cytoplasm. The catalysed reaction is N(2)-formyl-N(1)-(5-phospho-beta-D-ribosyl)glycinamide + L-glutamine + ATP + H2O = 2-formamido-N(1)-(5-O-phospho-beta-D-ribosyl)acetamidine + L-glutamate + ADP + phosphate + H(+). The enzyme catalyses L-glutamine + H2O = L-glutamate + NH4(+). Its pathway is purine metabolism; IMP biosynthesis via de novo pathway; 5-amino-1-(5-phospho-D-ribosyl)imidazole from N(2)-formyl-N(1)-(5-phospho-D-ribosyl)glycinamide: step 1/2. Its function is as follows. Part of the phosphoribosylformylglycinamidine synthase complex involved in the purines biosynthetic pathway. Catalyzes the ATP-dependent conversion of formylglycinamide ribonucleotide (FGAR) and glutamine to yield formylglycinamidine ribonucleotide (FGAM) and glutamate. The FGAM synthase complex is composed of three subunits. PurQ produces an ammonia molecule by converting glutamine to glutamate. PurL transfers the ammonia molecule to FGAR to form FGAM in an ATP-dependent manner. PurS interacts with PurQ and PurL and is thought to assist in the transfer of the ammonia molecule from PurQ to PurL. This Methanococcus maripaludis (strain C5 / ATCC BAA-1333) protein is Phosphoribosylformylglycinamidine synthase subunit PurQ.